A 281-amino-acid chain; its full sequence is Pantothenate synthetase (281 aa).

Met-30–His-37 contacts ATP. His-37 serves as the catalytic Proton donor. Gln-61 lines the (R)-pantoate pocket. Gln-61 provides a ligand contact to beta-alanine. ATP is bound at residue Gly-149 to Asp-152. Gln-155 lines the (R)-pantoate pocket. ATP is bound by residues Val-178 and Met-186–Arg-189.

This sequence belongs to the pantothenate synthetase family. In terms of assembly, homodimer.

Its subcellular location is the cytoplasm. The enzyme catalyses (R)-pantoate + beta-alanine + ATP = (R)-pantothenate + AMP + diphosphate + H(+). Its pathway is cofactor biosynthesis; (R)-pantothenate biosynthesis; (R)-pantothenate from (R)-pantoate and beta-alanine: step 1/1. Functionally, catalyzes the condensation of pantoate with beta-alanine in an ATP-dependent reaction via a pantoyl-adenylate intermediate. The chain is Pantothenate synthetase from Shewanella amazonensis (strain ATCC BAA-1098 / SB2B).